The chain runs to 127 residues: Large ribosomal subunit protein uL22 (127 aa).

As to quaternary structure, part of the 50S ribosomal subunit.

This protein binds specifically to 23S rRNA; its binding is stimulated by other ribosomal proteins, e.g. L4, L17, and L20. It is important during the early stages of 50S assembly. It makes multiple contacts with different domains of the 23S rRNA in the assembled 50S subunit and ribosome. Functionally, the globular domain of the protein is located near the polypeptide exit tunnel on the outside of the subunit, while an extended beta-hairpin is found that lines the wall of the exit tunnel in the center of the 70S ribosome. The polypeptide is Large ribosomal subunit protein uL22 (Rhodopseudomonas palustris (strain ATCC BAA-98 / CGA009)).